A 234-amino-acid chain; its full sequence is Leucyl/phenylalanyl-tRNA--protein transferase (234 aa).

The protein belongs to the L/F-transferase family.

It is found in the cytoplasm. The enzyme catalyses N-terminal L-lysyl-[protein] + L-leucyl-tRNA(Leu) = N-terminal L-leucyl-L-lysyl-[protein] + tRNA(Leu) + H(+). It catalyses the reaction N-terminal L-arginyl-[protein] + L-leucyl-tRNA(Leu) = N-terminal L-leucyl-L-arginyl-[protein] + tRNA(Leu) + H(+). It carries out the reaction L-phenylalanyl-tRNA(Phe) + an N-terminal L-alpha-aminoacyl-[protein] = an N-terminal L-phenylalanyl-L-alpha-aminoacyl-[protein] + tRNA(Phe). In terms of biological role, functions in the N-end rule pathway of protein degradation where it conjugates Leu, Phe and, less efficiently, Met from aminoacyl-tRNAs to the N-termini of proteins containing an N-terminal arginine or lysine. In Pectobacterium carotovorum subsp. carotovorum (strain PC1), this protein is Leucyl/phenylalanyl-tRNA--protein transferase.